A 491-amino-acid chain; its full sequence is Cytochrome P450 81F2 (491 aa).

The helical transmembrane segment at 283-303 threads the bilayer; it reads VIIKGLMLSMMLAGTDTAAVT. Residue Cys-429 participates in heme binding.

This sequence belongs to the cytochrome P450 family. Heme serves as cofactor.

The protein resides in the membrane. The protein operates within secondary metabolite biosynthesis. In terms of biological role, involved in indole glucosinolate biosynthesis. Catalyzes hydroxylation reactions of the glucosinolate indole ring. Converts indol-3-yl-methylglucosinolate (I3M) to 4-hydroxy-indol-3-yl-methylglucosinolate (4OH-I3M) and/or 1-hydroxy-indol-3-yl-methylglucosinolate (1OH-I3M) intermediates. These hydroxy intermediates are converted to 4-methoxy-indol-3-yl-methylglucosinolate (4MO-I3M) and 1-methoxy-indol-3-yl-methylglucosinolate (1MO-I3M) by indole glucosinolate methyltransferase 1 and 2 (IGMT1 and IGMT2). Contributes to defense against the green peach aphid (Myzus persicae), a generalist phloem-feeding herbivore. Required for the biosynthesis of antifungal indole glucosinolate metabolites. Required for the pathogen-induced accumulation of 4MO-I3M, which in turn is activated by the atypical BGLU26/PEN2 myrosinase. Required for the biosynthesis of Trp-derived antifungal compounds and non-host resistance to the necrotrophic fungal pathogen Plectosphaerella cucumerina. Required for resistance to the non-adapted fungal pathogen Colletotrichum gloeosporioides. This Arabidopsis thaliana (Mouse-ear cress) protein is Cytochrome P450 81F2.